We begin with the raw amino-acid sequence, 1257 residues long: MENSERAEEMQENYQRNGTAEEQPKLRKEAVGSIEIFRFADGLDITLMILGILASLVNGACLPLMPLVLGEMSDNLISGCLVQTNTTNYQNCTQSQEKLNEDMTLLTLYYVGIGVAALIFGYIQISLWIITAARQTKRIRKQFFHSVLAQDIGWFDSCDIGELNTRMTDDIDKISDGIGDKIALLFQNMSTFSIGLAVGLVKGWKLTLVTLSTSPLIMASAAACSRMVISLTSKELSAYSKAGAVAEEVLSSIRTVIAFRAQEKELQRYTQNLKDAKDFGIKRTIASKVSLGAVYFFMNGTYGLAFWYGTSLILNGEPGYTIGTVLAVFFSVIHSSYCIGAAVPHFETFAIARGAAFHIFQVIDKKPSIDNFSTAGYKPESIEGTVEFKNVSFNYPSRPSIKILKGLNLRIKSGETVALVGLNGSGKSTVVQLLQRLYDPDDGFIMVDENDIRALNVRHYRDHIGVVSQEPVLFGTTISNNIKYGRDDVTDEEMERAAREANAYDFIMEFPNKFNTLVGEKGAQMSGGQKQRIAIARALVRNPKILILDEATSALDSESKSAVQAALEKASKGRTTIVVAHRLSTIRSADLIVTLKDGMLAEKGAHAELMAKRGLYYSLVMSQDIKKADEQMESMTYSTERKTNSLPLHSVKSIKSDFIDKAEESTQSKEISLPEVSLLKILKLNKPEWPFVVLGTLASVLNGTVHPVFSIIFAKIITMFGNNDKTTLKHDAEIYSMIFVILGVICFVSYFMQGLFYGRAGEILTMRLRHLAFKAMLYQDIAWFDEKENSTGGLTTILAIDIAQIQGATGSRIGVLTQNATNMGLSVIISFIYGWEMTFLILSIAPVLAVTGMIETAAMTGFANKDKQELKHAGKIATEALENIRTIVSLTREKAFEQMYEEMLQTQHRNTSKKAQIIGSCYAFSHAFIYFAYAAGFRFGAYLIQAGRMTPEGMFIVFTAIAYGAMAIGETLVLAPEYSKAKSGAAHLFALLEKKPNIDSRSQEGKKPDTCEGNLEFREVSFFYPCRPDVFILRGLSLSIERGKTVAFVGSSGCGKSTSVQLLQRLYDPVQGQVLFDGVDAKELNVQWLRSQIAIVPQEPVLFNCSIAENIAYGDNSRVVPLDEIKEAANAANIHSFIEGLPEKYNTQVGLKGAQLSGGQKQRLAIARALLQKPKILLLDEATSALDNDSEKVVQHALDKARTGRTCLVVTHRLSAIQNADLIVVLHNGKIKEQGTHQELLRNRDIYFKLVNAQSVQ.

The disordered stretch occupies residues 1-24; the sequence is MENSERAEEMQENYQRNGTAEEQP. N17 is a glycosylation site (N-linked (GlcNAc...) asparagine). A helical membrane pass occupies residues 49 to 69; that stretch reads ILGILASLVNGACLPLMPLVL. One can recognise an ABC transmembrane type-1 1 domain in the interval 49–350; the sequence is ILGILASLVN…AAVPHFETFA (302 aa). N85 and N91 each carry an N-linked (GlcNAc...) asparagine glycan. 5 consecutive transmembrane segments (helical) span residues 110–130, 181–201, 203–223, 294–314, and 322–342; these read YVGI…LWII, KIAL…VGLV, GWKL…SAAA, VYFF…SLIL, and IGTV…IGAA. N371, N390, and N423 each carry an N-linked (GlcNAc...) asparagine glycan. The 237-residue stretch at 386–622 folds into the ABC transporter 1 domain; that stretch reads VEFKNVSFNY…RGLYYSLVMS (237 aa). Residue 421–428 participates in ATP binding; that stretch reads GLNGSGKS. 2 helical membrane-spanning segments follow: residues 693-713 and 737-757; these read VLGT…SIIF and MIFV…GLFY. The ABC transmembrane type-1 2 domain occupies 693 to 980; it reads VLGTLASVLN…TLVLAPEYSK (288 aa). N-linked (GlcNAc...) asparagine glycosylation is found at N789 and N819. Residues 827–847 form a helical membrane-spanning segment; sequence VIISFIYGWEMTFLILSIAPV. An N-linked (GlcNAc...) asparagine glycan is attached at N910. 2 consecutive transmembrane segments (helical) span residues 917-937 and 954-974; these read IIGS…AAGF and MFIV…TLVL. In terms of domain architecture, ABC transporter 2 spans 1015–1253; it reads LEFREVSFFY…RDIYFKLVNA (239 aa). 1050 to 1057 contacts ATP; it reads GSSGCGKS. N1104 and N1188 each carry an N-linked (GlcNAc...) asparagine glycan.

This sequence belongs to the ABC transporter superfamily. ABCB family. Multidrug resistance exporter (TC 3.A.1.201) subfamily. As to expression, expressed by CD133-expressing progenitor cells among epidermal melanocytes (at protein level). Widely expressed with specific expression in pigment cells. Highly expressed in several malignant tissues: highly expressed in clinical melanomas, with low expression in normal skin. In melanoma, marks malignant melanoma-initiating cells (MMIC), in which clinical virulence resides as a consequence of unlimited self-renewal capacity, resulting in inexorable tumor progression and metastasis. Also highly expressed in a number of leukemia cells. Expressed in basal limbal epithelium.

The protein localises to the cell membrane. The enzyme catalyses daunorubicin(in) + ATP + H2O = daunorubicin(out) + ADP + phosphate + H(+). Its function is as follows. Energy-dependent efflux transporter responsible for decreased drug accumulation in multidrug-resistant cells. Specifically present in limbal stem cells, where it plays a key role in corneal development and repair. In Homo sapiens (Human), this protein is ATP-binding cassette sub-family B member 5.